Reading from the N-terminus, the 486-residue chain is PTS system N-acetylmuramic acid-specific EIIBC component (486 aa).

Residues 1-89 (MAKITQTMIS…NKLIESVING (89 aa)) enclose the PTS EIIB type-1 domain. Cysteine 28 acts as the Phosphocysteine intermediate; for EIIB activity in catalysis. Residues 127-486 (SKFATIFTPL…FFGSKDVDLS (360 aa)) form the PTS EIIC type-1 domain. 10 helical membrane-spanning segments follow: residues 129 to 149 (FATIFTPLIPGFIAAGLLLGF), 170 to 190 (LIAYMKVFGKGLFAFLSILIG), 196 to 216 (AFGGSGVNGAILASLFVLGYN), 230 to 250 (FFGYTIDPRGNIIGVLLAAII), 268 to 288 (MILTSVVTLLIMGVITFVVIM), 312 to 332 (AAILAGLFLISVVFGIHQGFV), 347 to 367 (LFPILAMAGGGQVGASLALYF), 381 to 401 (GAIIPGILGIGEPLIYGVTLP), 411 to 431 (IGGAAGGFFIGLVSYLGLPVG), and 453 to 473 (IFAGMAVFVVGLLISYVVGFL).

The protein localises to the cell inner membrane. It carries out the reaction N-acetyl-beta-D-muramate(out) + N(pros)-phospho-L-histidyl-[protein] = N-acetyl-beta-D-muramate 6-phosphate(in) + L-histidyl-[protein]. In terms of biological role, the phosphoenolpyruvate-dependent sugar phosphotransferase system (sugar PTS), a major carbohydrate active transport system, catalyzes the phosphorylation of incoming sugar substrates concomitantly with their translocation across the cell membrane. This system is involved in N-acetylmuramic acid (MurNAc) transport, yielding cytoplasmic MurNAc-6-P. Is also able to take up anhydro-N-acetylmuramic acid (anhMurNAc), but cannot phosphorylate the carbon 6, probably because of the 1,6-anhydro ring. This Vibrio vulnificus (strain CMCP6) protein is PTS system N-acetylmuramic acid-specific EIIBC component (murP).